Consider the following 183-residue polypeptide: Ribosome rescue factor SmrB (183 aa).

The Smr domain maps to 98–173; it reads LDLHGLTQLQ…GDAALLVLIE (76 aa).

Belongs to the SmrB family. Associates with collided ribosomes, but not with correctly translating polysomes.

Functionally, acts as a ribosome collision sensor. Detects stalled/collided disomes (pairs of ribosomes where the leading ribosome is stalled and a second ribosome has collided with it) and endonucleolytically cleaves mRNA at the 5' boundary of the stalled ribosome. Stalled/collided disomes form a new interface (primarily via the 30S subunits) that binds SmrB. Cleaved mRNA becomes available for tmRNA ligation, leading to ribosomal subunit dissociation and rescue of stalled ribosomes. The sequence is that of Ribosome rescue factor SmrB from Escherichia coli O7:K1 (strain IAI39 / ExPEC).